Consider the following 277-residue polypeptide: MALKHFNPITPGQRQLVIVDRSELYKGKPVKSLTEGLSKKGGRNNTGRITVRFQGGGHKRSYRFIDFKRRKLDVVGTVERLEYDPNRTAFIALIRYTDGELAYILAPQRLAVGDQVVAGNFVDVKPGNAMPLSSMPVGTIIHNVELKPGKGGQIARSAGTYAQLVGRDQGMAILRLNSGEQRLVSGACFASVGAVSNPDHGNINDGKAGRSVWRGKRPHVRGVAMNPVDHPHGGGEGRTSGGRHPVTPWGKPTKGKKTRSNKATDKFIMRSRHQRKK.

A disordered region spans residues 222–277 (GVAMNPVDHPHGGGEGRTSGGRHPVTPWGKPTKGKKTRSNKATDKFIMRSRHQRKK).

This sequence belongs to the universal ribosomal protein uL2 family. In terms of assembly, part of the 50S ribosomal subunit. Forms a bridge to the 30S subunit in the 70S ribosome.

One of the primary rRNA binding proteins. Required for association of the 30S and 50S subunits to form the 70S ribosome, for tRNA binding and peptide bond formation. It has been suggested to have peptidyltransferase activity; this is somewhat controversial. Makes several contacts with the 16S rRNA in the 70S ribosome. The polypeptide is Large ribosomal subunit protein uL2 (Brucella ovis (strain ATCC 25840 / 63/290 / NCTC 10512)).